Consider the following 384-residue polypeptide: Autophagy-related protein 25 (384 aa).

2 coiled-coil regions span residues 132–236 (KETA…RRAS) and 342–379 (KKNNQTDKDQEIASLRNRLSEMEQNYERVLATMEQWKT). The tract at residues 224–247 (ESRLSNMNKRRASPRDDAEAEPKR) is disordered. Basic and acidic residues predominate over residues 236–247 (SPRDDAEAEPKR).

This sequence belongs to the ADIP family.

Its subcellular location is the preautophagosomal structure membrane. In terms of biological role, specifically required for selective degradation of peroxisomes via macropexophagy. The chain is Autophagy-related protein 25 (ATG25) from Pichia angusta (Yeast).